The chain runs to 920 residues: GTPase activating protein homolog 1 (920 aa).

Residues 65–87 (NLGGLSNDSTNNNSNSNNTIDSS) show a composition bias toward low complexity. Positions 65–91 (NLGGLSNDSTNNNSNSNNTIDSSKPLS) are disordered. The 255-residue stretch at 90–344 (LSFENDMSDG…FVDIIDPEVD (255 aa)) folds into the F-BAR domain. A coiled-coil region spans residues 184–276 (LNEAIKDMEK…EDEYKEQINE (93 aa)). Low complexity predominate over residues 403-449 (TNTITSQSGSTIISNGASQPIEIPSPQPISEQQQIPPQQQQQQQQAQ). Disordered regions lie at residues 403–468 (TNTI…PMGR) and 490–518 (STSS…LSKS). Positions 450 to 468 (VPPTSINQSSSPPVNPMGR) are enriched in polar residues. Residues 490–513 (STSSLLTKDGNSTTSSNTSTSNSN) are compositionally biased toward low complexity. The Rho-GAP domain maps to 533–716 (VELEVLIEND…NMIIDSLETK (184 aa)). The segment at 727 to 836 (PIIPDDENSD…VSSNGNNINS (110 aa)) is disordered. The span at 730-741 (PDDENSDDDDDD) shows a compositional bias: acidic residues. The segment covering 757 to 836 (NDINTTNINN…VSSNGNNINS (80 aa)) has biased composition (low complexity).

Its subcellular location is the cytoplasm. The protein resides in the contractile vacuole. Functionally, rho GTPase-activating protein involved in the signal transduction pathway. Regulator of the contractile vacuole network as well as involved in driving vacuole emptying. In Dictyostelium discoideum (Social amoeba), this protein is GTPase activating protein homolog 1 (mgp1).